The sequence spans 84 residues: Cytochrome b559 subunit alpha (84 aa).

The chain crosses the membrane as a helical span at residues 22 to 36 (IIHSITIPSLFVAGF). His24 provides a ligand contact to heme.

The protein belongs to the PsbE/PsbF family. In terms of assembly, heterodimer of an alpha subunit and a beta subunit. PSII is composed of 1 copy each of membrane proteins PsbA, PsbB, PsbC, PsbD, PsbE, PsbF, PsbH, PsbI, PsbJ, PsbK, PsbL, PsbM, PsbT, PsbX, PsbY, PsbZ, Psb30/Ycf12, at least 3 peripheral proteins of the oxygen-evolving complex and a large number of cofactors. It forms dimeric complexes. It depends on heme b as a cofactor.

Its subcellular location is the plastid. The protein localises to the chloroplast thylakoid membrane. This b-type cytochrome is tightly associated with the reaction center of photosystem II (PSII). PSII is a light-driven water:plastoquinone oxidoreductase that uses light energy to abstract electrons from H(2)O, generating O(2) and a proton gradient subsequently used for ATP formation. It consists of a core antenna complex that captures photons, and an electron transfer chain that converts photonic excitation into a charge separation. The protein is Cytochrome b559 subunit alpha of Emiliania huxleyi (Coccolithophore).